A 465-amino-acid chain; its full sequence is ATP-dependent protease ATPase subunit HslU (465 aa).

ATP contacts are provided by residues Val18, Gly60–Glu65, Asp277, Glu342, and Arg414.

The protein belongs to the ClpX chaperone family. HslU subfamily. As to quaternary structure, a double ring-shaped homohexamer of HslV is capped on each side by a ring-shaped HslU homohexamer. The assembly of the HslU/HslV complex is dependent on binding of ATP.

It is found in the cytoplasm. In terms of biological role, ATPase subunit of a proteasome-like degradation complex; this subunit has chaperone activity. The binding of ATP and its subsequent hydrolysis by HslU are essential for unfolding of protein substrates subsequently hydrolyzed by HslV. HslU recognizes the N-terminal part of its protein substrates and unfolds these before they are guided to HslV for hydrolysis. In Caldicellulosiruptor saccharolyticus (strain ATCC 43494 / DSM 8903 / Tp8T 6331), this protein is ATP-dependent protease ATPase subunit HslU.